A 99-amino-acid chain; its full sequence is Small ribosomal subunit protein bS6c (99 aa).

It belongs to the bacterial ribosomal protein bS6 family.

The protein resides in the plastid. Its subcellular location is the chloroplast. Its function is as follows. Binds together with bS18 to 16S ribosomal RNA. This Cyanidioschyzon merolae (strain NIES-3377 / 10D) (Unicellular red alga) protein is Small ribosomal subunit protein bS6c.